The following is a 238-amino-acid chain: Probable transcriptional regulatory protein LACR_0237 (238 aa).

It belongs to the TACO1 family. YeeN subfamily.

It localises to the cytoplasm. The chain is Probable transcriptional regulatory protein LACR_0237 from Lactococcus lactis subsp. cremoris (strain SK11).